A 129-amino-acid chain; its full sequence is SOSS complex subunit C homolog (129 aa).

Positions 105–129 are disordered; sequence RLEPLPSPATTPTTPNAPPSHNISK.

The protein belongs to the SOSS-C family.

The sequence is that of SOSS complex subunit C homolog from Drosophila erecta (Fruit fly).